The sequence spans 829 residues: Ectonucleotide pyrophosphatase/phosphodiesterase C27A7.1 (829 aa).

The helical; Signal-anchor for type II membrane protein transmembrane segment at 54–74 threads the bilayer; the sequence is VIGIAVLLLAMVVIVVIVLLL. Catalysis depends on T224, which acts as the Nucleophile. N-linked (GlcNAc...) asparagine glycans are attached at residues N296, N424, N514, N542, N582, N649, N733, and N748. Residues C439 and C782 are joined by a disulfide bond.

This sequence belongs to the nucleotide pyrophosphatase/phosphodiesterase family.

Its subcellular location is the membrane. Functionally, probable phosphodiesterase. The polypeptide is Ectonucleotide pyrophosphatase/phosphodiesterase C27A7.1 (Caenorhabditis elegans).